The primary structure comprises 148 residues: Holo-[acyl-carrier-protein] synthase (148 aa).

Mg(2+) contacts are provided by aspartate 8 and glutamate 57.

It belongs to the P-Pant transferase superfamily. AcpS family. Mg(2+) serves as cofactor.

The protein resides in the cytoplasm. The catalysed reaction is apo-[ACP] + CoA = holo-[ACP] + adenosine 3',5'-bisphosphate + H(+). Functionally, transfers the 4'-phosphopantetheine moiety from coenzyme A to a Ser of acyl-carrier-protein. The protein is Holo-[acyl-carrier-protein] synthase of Ruegeria pomeroyi (strain ATCC 700808 / DSM 15171 / DSS-3) (Silicibacter pomeroyi).